A 697-amino-acid polypeptide reads, in one-letter code: Elongation factor G (697 aa).

Positions 8-282 (EDYRNIGIMA…AVVDYLPSPL (275 aa)) constitute a tr-type G domain. GTP contacts are provided by residues 17 to 24 (AHIDAGKT), 81 to 85 (DTPGH), and 135 to 138 (NKMD).

Belongs to the TRAFAC class translation factor GTPase superfamily. Classic translation factor GTPase family. EF-G/EF-2 subfamily.

It is found in the cytoplasm. Its function is as follows. Catalyzes the GTP-dependent ribosomal translocation step during translation elongation. During this step, the ribosome changes from the pre-translocational (PRE) to the post-translocational (POST) state as the newly formed A-site-bound peptidyl-tRNA and P-site-bound deacylated tRNA move to the P and E sites, respectively. Catalyzes the coordinated movement of the two tRNA molecules, the mRNA and conformational changes in the ribosome. This is Elongation factor G from Mycoplasmopsis agalactiae (strain NCTC 10123 / CIP 59.7 / PG2) (Mycoplasma agalactiae).